The primary structure comprises 359 residues: Peptide chain release factor 1 (359 aa).

Gln235 carries the post-translational modification N5-methylglutamine. The segment covering 283–294 (SKADEERSESRK) has biased composition (basic and acidic residues). The disordered stretch occupies residues 283 to 309 (SKADEERSESRKSQVGSGDRSERIRTY).

It belongs to the prokaryotic/mitochondrial release factor family. In terms of processing, methylated by PrmC. Methylation increases the termination efficiency of RF1.

Its subcellular location is the cytoplasm. Functionally, peptide chain release factor 1 directs the termination of translation in response to the peptide chain termination codons UAG and UAA. The sequence is that of Peptide chain release factor 1 from Mesorhizobium japonicum (strain LMG 29417 / CECT 9101 / MAFF 303099) (Mesorhizobium loti (strain MAFF 303099)).